Here is an 858-residue protein sequence, read N- to C-terminus: Protein 4.1 (858 aa).

Positions 1 to 125 (MTTEKSLAAE…KEIELGNSLD (125 aa)) are disordered. The residue at position 14 (Ser-14) is a Phosphoserine. The span at 31-50 (QQETQLEEASQAAAAEGSDQ) shows a compositional bias: low complexity. The residue at position 62 (Thr-62) is a Phosphothreonine. The span at 63–77 (PTHEDLTKNKERTSE) shows a compositional bias: basic and acidic residues. Low complexity predominate over residues 78–89 (SRGLSRLLSSFL). Ser-86, Ser-87, Ser-97, Ser-106, Ser-123, Ser-151, Ser-153, and Ser-154 each carry phosphoserine. Basic and acidic residues predominate over residues 103 to 119 (EVESEKEKGEGGQKEIE). Residues 155-208 (IETQPAQEEHREDPDSETKEGEGIEECSGTEVKEDPESRAEREPEASQKPVRRH) form a disordered region. 2 stretches are compositionally biased toward basic and acidic residues: residues 161 to 176 (QEEHREDPDSETKEGE) and 185 to 200 (EVKEDPESRAEREPEA). Ser-192 bears the Phosphoserine mark. The 282-residue stretch at 211 to 492 (MHCKVSLLDD…EHHTFFRLTS (282 aa)) folds into the FERM domain. A Phosphotyrosine modification is found at Tyr-223. Phosphothreonine is present on Thr-379. The segment at 495-608 (TIPKSKFLAL…PAEPEPTEAW (114 aa)) is hydrophilic. The tract at residues 518–636 (TRQASALIDR…TQKLAGKGED (119 aa)) is disordered. Phosphoserine occurs at positions 522, 541, 543, and 556. Basic and acidic residues-rich tracts occupy residues 581 to 595 (TPKEAVKVEEKRGEE) and 606 to 615 (EAWKVEKTHT). Residues 609–707 (KVEKTHTEVT…WDKRLSTHSP (99 aa)) form a spectrin--actin-binding region. Residues 616-629 (EVTVPTSNGDQTQK) are compositionally biased toward polar residues. A Phosphotyrosine modification is found at Tyr-654. Phosphoserine is present on residues Ser-658, Ser-668, Ser-678, Ser-703, and Ser-706. Positions 710-858 (TLNINGQVPT…VHQETEISEE (149 aa)) are C-terminal (CTD). Thr-730 and Thr-853 each carry phosphothreonine.

As to quaternary structure, binds with a high affinity to glycophorin and with lower affinity to band III protein. Associates with the nuclear mitotic apparatus. Binds calmodulin, CPAP and DLG1. Also found to associate with contractile apparatus and tight junctions. Interacts with NUMA1; this interaction is negatively regulated by CDK1 during metaphase and promotes anaphase-specific localization of NUMA1 in symmetrically dividing cells. Interacts with ATP2B1; regulates small intestinal calcium absorption through regulation of membrane expression of ATP2B1. O-glycosylated; contains N-acetylglucosamine side chains in the C-terminal domain. Post-translationally, phosphorylated at multiple sites by different protein kinases and each phosphorylation event selectively modulates the protein's functions. In terms of processing, phosphorylation on Tyr-654 reduces the ability of 4.1 to promote the assembly of the spectrin/actin/4.1 ternary complex.

Its subcellular location is the nucleus. It is found in the cytoplasm. It localises to the cytoskeleton. The protein resides in the cell cortex. In terms of biological role, protein 4.1 is a major structural element of the erythrocyte membrane skeleton. It plays a key role in regulating membrane physical properties of mechanical stability and deformability by stabilizing spectrin-actin interaction. Recruits DLG1 to membranes. Required for dynein-dynactin complex and NUMA1 recruitment at the mitotic cell cortex during anaphase. This Mus musculus (Mouse) protein is Protein 4.1.